Here is a 418-residue protein sequence, read N- to C-terminus: Tyrosine--tRNA ligase (418 aa).

Residue Y38 participates in L-tyrosine binding. The 'HIGH' region motif lies at 43–52 (CTAKSLHVGS). L-tyrosine is bound by residues Y175 and Q179. A 'KMSKS' region motif is present at residues 235–239 (KMGKT). K238 is an ATP binding site. Residues 348–413 (LPIIKLLQIS…CGKKRHLKIM (66 aa)) enclose the S4 RNA-binding domain.

The protein belongs to the class-I aminoacyl-tRNA synthetase family. TyrS type 1 subfamily. As to quaternary structure, homodimer.

The protein resides in the cytoplasm. It carries out the reaction tRNA(Tyr) + L-tyrosine + ATP = L-tyrosyl-tRNA(Tyr) + AMP + diphosphate + H(+). Its function is as follows. Catalyzes the attachment of tyrosine to tRNA(Tyr) in a two-step reaction: tyrosine is first activated by ATP to form Tyr-AMP and then transferred to the acceptor end of tRNA(Tyr). The chain is Tyrosine--tRNA ligase from Ehrlichia canis (strain Jake).